The chain runs to 498 residues: Glycerol kinase (498 aa).

Thr12 contributes to the ADP binding site. Residues Thr12, Thr13, and Ser14 each coordinate ATP. Thr12 provides a ligand contact to sn-glycerol 3-phosphate. Arg16 is an ADP binding site. Residues Arg82, Glu83, and Tyr134 each contribute to the sn-glycerol 3-phosphate site. Glycerol contacts are provided by Arg82, Glu83, and Tyr134. His230 is subject to Phosphohistidine; by HPr. Sn-glycerol 3-phosphate is bound at residue Asp244. Glycerol is bound by residues Asp244 and Gln245. The ADP site is built by Thr266 and Gly309. ATP is bound by residues Thr266, Gly309, Gln313, and Gly410. The ADP site is built by Gly410 and Asn414.

Belongs to the FGGY kinase family. Homotetramer and homodimer (in equilibrium). In terms of processing, the phosphoenolpyruvate-dependent sugar phosphotransferase system (PTS), including enzyme I, and histidine-containing protein (HPr) are required for the phosphorylation, which leads to the activation of the enzyme.

The catalysed reaction is glycerol + ATP = sn-glycerol 3-phosphate + ADP + H(+). It participates in polyol metabolism; glycerol degradation via glycerol kinase pathway; sn-glycerol 3-phosphate from glycerol: step 1/1. Its activity is regulated as follows. Activated by phosphorylation and inhibited by fructose 1,6-bisphosphate (FBP). Functionally, key enzyme in the regulation of glycerol uptake and metabolism. Catalyzes the phosphorylation of glycerol to yield sn-glycerol 3-phosphate. This is Glycerol kinase from Staphylococcus aureus (strain bovine RF122 / ET3-1).